Here is a 438-residue protein sequence, read N- to C-terminus: 3-phosphoshikimate 1-carboxyvinyltransferase (438 aa).

Positions 26, 27, and 31 each coordinate 3-phosphoshikimate. Lys-26 serves as a coordination point for phosphoenolpyruvate. The phosphoenolpyruvate site is built by Gly-99 and Arg-127. The 3-phosphoshikimate site is built by Ser-170, Ser-171, Gln-172, Ser-199, Glu-314, and His-343. Gln-172 contributes to the phosphoenolpyruvate binding site. Glu-314 functions as the Proton acceptor in the catalytic mechanism. 3 residues coordinate phosphoenolpyruvate: Arg-347, Arg-388, and Lys-413.

This sequence belongs to the EPSP synthase family. Monomer.

The protein resides in the cytoplasm. It catalyses the reaction 3-phosphoshikimate + phosphoenolpyruvate = 5-O-(1-carboxyvinyl)-3-phosphoshikimate + phosphate. It functions in the pathway metabolic intermediate biosynthesis; chorismate biosynthesis; chorismate from D-erythrose 4-phosphate and phosphoenolpyruvate: step 6/7. Catalyzes the transfer of the enolpyruvyl moiety of phosphoenolpyruvate (PEP) to the 5-hydroxyl of shikimate-3-phosphate (S3P) to produce enolpyruvyl shikimate-3-phosphate and inorganic phosphate. The polypeptide is 3-phosphoshikimate 1-carboxyvinyltransferase (Mycobacterium sp. (strain JLS)).